The primary structure comprises 60 residues: Large ribosomal subunit protein bL32 (60 aa).

The segment at 1-28 (MAVQQNKKSRSKRDMRRSHDALTGPTLS) is disordered. Positions 7–16 (KKSRSKRDMR) are enriched in basic residues.

Belongs to the bacterial ribosomal protein bL32 family.

This chain is Large ribosomal subunit protein bL32, found in Cellvibrio japonicus (strain Ueda107) (Pseudomonas fluorescens subsp. cellulosa).